The following is a 105-amino-acid chain: ATP-dependent Clp protease adapter protein ClpS (105 aa).

The protein belongs to the ClpS family. As to quaternary structure, binds to the N-terminal domain of the chaperone ClpA.

Its function is as follows. Involved in the modulation of the specificity of the ClpAP-mediated ATP-dependent protein degradation. The sequence is that of ATP-dependent Clp protease adapter protein ClpS from Aeromonas hydrophila subsp. hydrophila (strain ATCC 7966 / DSM 30187 / BCRC 13018 / CCUG 14551 / JCM 1027 / KCTC 2358 / NCIMB 9240 / NCTC 8049).